An 84-amino-acid polypeptide reads, in one-letter code: Large ribosomal subunit protein bL27 (84 aa).

The segment at 1 to 25 is disordered; it reads MAHKKGQGSTQNNRDSAGRRLGVKK.

This sequence belongs to the bacterial ribosomal protein bL27 family.

This chain is Large ribosomal subunit protein bL27, found in Sulfurovum sp. (strain NBC37-1).